The primary structure comprises 594 residues: Class I diterpene synthase TPS6, chloroplastic (594 aa).

Mg(2+)-binding residues include D330, D334, N474, Q477, and E482. Positions 330–334 (DDFFD) match the DDXXD motif motif.

This sequence belongs to the terpene synthase family. It depends on Mg(2+) as a cofactor. In terms of tissue distribution, mostly expressed in trichomes of leaves and fruits.

It localises to the plastid. It is found in the chloroplast. The enzyme catalyses peregrinol diphosphate = labd-13(16),14-diene-9-ol + diphosphate. It catalyses the reaction 9alpha-copalyl diphosphate = syn-isopimara-7,15-diene + diphosphate. The protein operates within secondary metabolite biosynthesis; terpenoid biosynthesis. Involved in the biosynthesis of labdane-type diterpenoid including cleroda-dienols, and peregrinol lactones and furan derivatives, dopaminergic diterpenoids that can bind to dopamine receptors in the human pituitary gland, have probably ability to lower prolactin levels, and are used to treat menstrual cycle disorders (e.g. premenstrual syndrome and mastodynia). Terpene synthase the catalyzes the conversion of peregrinol diphosphate to labda-13(16),14-dien-9-ol, and of syn-copalyl diphosophate to dehydroabietadiene and syn-isopimara-7,15-diene. The polypeptide is Class I diterpene synthase TPS6, chloroplastic (Vitex agnus-castus (Chaste tree)).